A 252-amino-acid polypeptide reads, in one-letter code: Pimeloyl-[acyl-carrier protein] methyl ester esterase (252 aa).

One can recognise an AB hydrolase-1 domain in the interval 15–239; sequence LVMLHGWAMH…FPHCGHAPFL (225 aa). Residues Trp-21, 81–82, and 143–147 contribute to the substrate site; these read SL and FLTLQ. Catalysis depends on Ser-81, which acts as the Nucleophile. Residues Asp-207 and His-235 contribute to the active site. Substrate is bound at residue His-235.

It belongs to the AB hydrolase superfamily. Carboxylesterase BioH family. In terms of assembly, monomer.

Its subcellular location is the cytoplasm. It catalyses the reaction 6-carboxyhexanoyl-[ACP] methyl ester + H2O = 6-carboxyhexanoyl-[ACP] + methanol + H(+). It participates in cofactor biosynthesis; biotin biosynthesis. Functionally, the physiological role of BioH is to remove the methyl group introduced by BioC when the pimeloyl moiety is complete. It allows to synthesize pimeloyl-ACP via the fatty acid synthetic pathway through the hydrolysis of the ester bonds of pimeloyl-ACP esters. The sequence is that of Pimeloyl-[acyl-carrier protein] methyl ester esterase from Nitrosomonas europaea (strain ATCC 19718 / CIP 103999 / KCTC 2705 / NBRC 14298).